The sequence spans 336 residues: DNA polymerase beta (336 aa).

K(+)-binding residues include lysine 59, leucine 61, and valine 64. Na(+) contacts are provided by lysine 59, leucine 61, and valine 64. The Nucleophile; Schiff-base intermediate with DNA; for 5'-dRP lyase activity role is filled by lysine 71. Position 82 is an omega-N-methylarginine; by PRMT6 (arginine 82). K(+) is bound by residues threonine 100, valine 102, and isoleucine 105. Na(+) is bound by residues threonine 100, valine 102, and isoleucine 105. Arginine 148 contacts a 2'-deoxyribonucleoside 5'-triphosphate. Residue arginine 151 is modified to Omega-N-methylarginine; by PRMT6. A 2'-deoxyribonucleoside 5'-triphosphate contacts are provided by serine 179, arginine 182, glycine 188, and aspartate 189. Residues 182 to 191 (RGAESSGDID) form a DNA-binding region. The Mg(2+) site is built by aspartate 189, aspartate 191, and aspartate 257.

It belongs to the DNA polymerase type-X family. Mg(2+) serves as cofactor. In terms of processing, methylation by PRMT6 stimulates the polymerase activity by enhancing DNA binding and processivity. Ubiquitinated: monoubiquitinated by huwe1/arf-bp1. Monoubiquitinated protein is then the target of stub1/chip, which catalyzes polyubiquitination from monoubiquitin, leading to degradation by the proteasome. usp47 mediates the deubiquitination of monoubiquitinated protein, preventing polyubiquitination by STUB1/CHIP and its subsequent degradation.

The protein resides in the nucleus. It localises to the cytoplasm. It catalyses the reaction DNA(n) + a 2'-deoxyribonucleoside 5'-triphosphate = DNA(n+1) + diphosphate. The enzyme catalyses a 5'-end 2'-deoxyribose-2'-deoxyribonucleotide-DNA = (2E,4S)-4-hydroxypenten-2-al-5-phosphate + a 5'-end 5'-phospho-2'-deoxyribonucleoside-DNA + H(+). It carries out the reaction 2'-deoxyribonucleotide-(2'-deoxyribose 5'-phosphate)-2'-deoxyribonucleotide-DNA = a 3'-end 2'-deoxyribonucleotide-(2,3-dehydro-2,3-deoxyribose 5'-phosphate)-DNA + a 5'-end 5'-phospho-2'-deoxyribonucleoside-DNA + H(+). Its function is as follows. Repair polymerase that plays a key role in base-excision repair. During this process, the damaged base is excised by specific DNA glycosylases, the DNA backbone is nicked at the abasic site by an apurinic/apyrimidic (AP) endonuclease, and POLB removes 5'-deoxyribose-phosphate from the preincised AP site acting as a 5'-deoxyribose-phosphate lyase (5'-dRP lyase); through its DNA polymerase activity, it adds one nucleotide to the 3' end of the arising single-nucleotide gap. Conducts 'gap-filling' DNA synthesis in a stepwise distributive fashion rather than in a processive fashion as for other DNA polymerases. It is also able to cleave sugar-phosphate bonds 3' to an intact AP site, acting as an AP lyase. This Danio rerio (Zebrafish) protein is DNA polymerase beta (polb).